The chain runs to 445 residues: Tubby-like F-box protein 10 (445 aa).

The 56-residue stretch at S57–G112 folds into the F-box domain. Residues P382–A398 are compositionally biased toward low complexity. Residues P382–E401 form a disordered region.

The protein belongs to the TUB family. As to quaternary structure, part of a SCF (ASK-cullin-F-box) protein ligase complex. Interacts with SKP1A/ASK1. Ubiquitous.

It localises to the nucleus. Its pathway is protein modification; protein ubiquitination. Functionally, component of SCF(ASK-cullin-F-box) E3 ubiquitin ligase complexes, which may mediate the ubiquitination and subsequent proteasomal degradation of target proteins. The chain is Tubby-like F-box protein 10 from Arabidopsis thaliana (Mouse-ear cress).